Here is a 1748-residue protein sequence, read N- to C-terminus: Non-structural replication polyprotein (1748 aa).

Residues 58 to 219 (SGLTSTPHPH…NQPVNALDWL (162 aa)) enclose the Alphavirus-like MT domain. Disordered regions lie at residues 433-507 (APLS…PPLT) and 569-633 (PASP…PAPL). The segment covering 458–475 (SASQSTSLSLSASSQLLS) has biased composition (low complexity). A compositionally biased stretch (polar residues) spans 491–500 (VSTSCPSASK). Residues 579–600 (HPLPPAQKPPRPPTTVPTPKPL) show a composition bias toward pro residues. Over residues 601 to 616 (ASPSQTQAAQPATQSP) the composition is skewed to low complexity. The Peptidase C21 domain maps to 627 to 781 (SLLPAPLETD…PLRAGSPPSR (155 aa)). Catalysis depends on for protease activity residues C680 and H766. Residues 767-786 (FTAPDPLRAGSPPSRSQTNE) form a disordered region. The 158-residue stretch at 844–1001 (SGPSPRDRIF…RLLPFIDYYC (158 aa)) folds into the (+)RNA virus helicase ATP-binding domain. An ATP-binding site is contributed by 874 to 881 (GFAGCGKT). Residues 1002 to 1138 (YWSYRVPKCV…LPDFFPEIVF (137 aa)) enclose the (+)RNA virus helicase C-terminal domain. A RdRp catalytic domain is found at 1474 to 1580 (SHCTTNDYTA…SGTLSPRSNW (107 aa)).

This sequence belongs to the Tymoviridae non-structural replication polyprotein family. Post-translationally, specific enzymatic cleavages by the host yield mature proteins.

It carries out the reaction RNA(n) + a ribonucleoside 5'-triphosphate = RNA(n+1) + diphosphate. Functionally, acts as a cysteine protease, methyltransferase and deubiquitinase. The cysteine protease activity cleaves the polyprotein giving rise to mature proteins. The methyltransferase domain is probably involved in viral RNA capping. RNA-directed RNA polymerase is responsible for the replication and transcription of the genome. The protein is Non-structural replication polyprotein of Erysimum latent virus (ELV).